The chain runs to 233 residues: Attacin-B (233 aa).

The first 17 residues, 1–17, serve as a signal peptide directing secretion; that stretch reads MFAKLFLVSVLLVGVNS. Residues 18 to 46 constitute a propeptide that is removed on maturation; that stretch reads RYVLVEEPGYYDKQYEEQPQQWVNSRVRR.

Belongs to the attacin/sarcotoxin-2 family.

It is found in the secreted. Functionally, hemolymph antibacterial protein. The protein is Attacin-B of Hyalophora cecropia (Cecropia moth).